The following is a 338-amino-acid chain: Ornithine carbamoyltransferase (338 aa).

Residues 56–59 (STRT), Arg107, and 134–137 (HPTQ) contribute to the carbamoyl phosphate site. Residues Asn168, Asp232, and 236 to 237 (SM) contribute to the L-ornithine site. Carbamoyl phosphate is bound by residues 274–275 (CL) and Arg320.

It belongs to the aspartate/ornithine carbamoyltransferase superfamily. OTCase family.

The protein resides in the cytoplasm. It catalyses the reaction carbamoyl phosphate + L-ornithine = L-citrulline + phosphate + H(+). The protein operates within amino-acid degradation; L-arginine degradation via ADI pathway; carbamoyl phosphate from L-arginine: step 2/2. Its function is as follows. Reversibly catalyzes the transfer of the carbamoyl group from carbamoyl phosphate (CP) to the N(epsilon) atom of ornithine (ORN) to produce L-citrulline. This is Ornithine carbamoyltransferase from Buchnera aphidicola subsp. Acyrthosiphon pisum (strain 5A).